The primary structure comprises 359 residues: Insulin gene enhancer protein ISL-2 (359 aa).

LIM zinc-binding domains lie at 25 to 86 and 87 to 149; these read AMCV…RLFG and IKCA…LLER. Positions 151–191 are disordered; sequence AAGSPRSPGPLPGARGLHLPDAGSGRQPALRPHVHKQTEKT. Phosphoserine occurs at positions 154 and 157. A DNA-binding region (homeobox) is located at residues 191–250; that stretch reads TTRVRTVLNEKQLHTLRTCYAANPRPDALMKEQLVEMTGLSPRVIRVWFQNKRCKDKKKS. Positions 272-301 are LIM-binding domain (LID); that stretch reads GTPLVAGSPIRHENAVQGSAVEVQTYQPPW. Residue S279 is modified to Phosphoserine. Residues 326 to 336 show a composition bias toward low complexity; it reads ESGSLGNSSGS. The tract at residues 326-359 is disordered; it reads ESGSLGNSSGSDVTSLSSQLPDTPNSMVPSPVET. A compositionally biased stretch (polar residues) spans 337-359; it reads DVTSLSSQLPDTPNSMVPSPVET.

Interacts with LHX4.

The protein localises to the nucleus. In terms of biological role, transcriptional factor that defines subclasses of motoneurons that segregate into columns in the spinal cord and select distinct axon pathways. This chain is Insulin gene enhancer protein ISL-2 (ISL2), found in Homo sapiens (Human).